The chain runs to 151 residues: 6,7-dimethyl-8-ribityllumazine synthase (151 aa).

5-amino-6-(D-ribitylamino)uracil is bound by residues Phe23, 55 to 57 (AYE), and 79 to 81 (AVI). Residue 84-85 (AT) participates in (2S)-2-hydroxy-3-oxobutyl phosphate binding. Residue His87 is the Proton donor of the active site. Phe111 lines the 5-amino-6-(D-ribitylamino)uracil pocket. Arg125 is a (2S)-2-hydroxy-3-oxobutyl phosphate binding site.

Belongs to the DMRL synthase family.

The enzyme catalyses (2S)-2-hydroxy-3-oxobutyl phosphate + 5-amino-6-(D-ribitylamino)uracil = 6,7-dimethyl-8-(1-D-ribityl)lumazine + phosphate + 2 H2O + H(+). The protein operates within cofactor biosynthesis; riboflavin biosynthesis; riboflavin from 2-hydroxy-3-oxobutyl phosphate and 5-amino-6-(D-ribitylamino)uracil: step 1/2. Functionally, catalyzes the formation of 6,7-dimethyl-8-ribityllumazine by condensation of 5-amino-6-(D-ribitylamino)uracil with 3,4-dihydroxy-2-butanone 4-phosphate. This is the penultimate step in the biosynthesis of riboflavin. In Leptospira interrogans serogroup Icterohaemorrhagiae serovar Lai (strain 56601), this protein is 6,7-dimethyl-8-ribityllumazine synthase.